The following is a 379-amino-acid chain: UDP-4-amino-4-deoxy-L-arabinose--oxoglutarate aminotransferase (379 aa).

Lys-182 bears the N6-(pyridoxal phosphate)lysine mark.

It belongs to the DegT/DnrJ/EryC1 family. ArnB subfamily. Homodimer. Requires pyridoxal 5'-phosphate as cofactor.

It carries out the reaction UDP-4-amino-4-deoxy-beta-L-arabinose + 2-oxoglutarate = UDP-beta-L-threo-pentopyranos-4-ulose + L-glutamate. It functions in the pathway nucleotide-sugar biosynthesis; UDP-4-deoxy-4-formamido-beta-L-arabinose biosynthesis; UDP-4-deoxy-4-formamido-beta-L-arabinose from UDP-alpha-D-glucuronate: step 2/3. Its pathway is bacterial outer membrane biogenesis; lipopolysaccharide biosynthesis. In terms of biological role, catalyzes the conversion of UDP-4-keto-arabinose (UDP-Ara4O) to UDP-4-amino-4-deoxy-L-arabinose (UDP-L-Ara4N). The modified arabinose is attached to lipid A and is required for resistance to polymyxin and cationic antimicrobial peptides. The protein is UDP-4-amino-4-deoxy-L-arabinose--oxoglutarate aminotransferase of Escherichia coli O8 (strain IAI1).